The chain runs to 174 residues: ATP-dependent protease subunit HslV (174 aa).

The active site involves Thr2. Na(+)-binding residues include Gly157, Cys160, and Thr163.

This sequence belongs to the peptidase T1B family. HslV subfamily. In terms of assembly, a double ring-shaped homohexamer of HslV is capped on each side by a ring-shaped HslU homohexamer. The assembly of the HslU/HslV complex is dependent on binding of ATP.

The protein localises to the cytoplasm. It carries out the reaction ATP-dependent cleavage of peptide bonds with broad specificity.. Allosterically activated by HslU binding. Its function is as follows. Protease subunit of a proteasome-like degradation complex believed to be a general protein degrading machinery. The chain is ATP-dependent protease subunit HslV from Shewanella sediminis (strain HAW-EB3).